The following is a 123-amino-acid chain: Alpha-lactalbumin B/C (123 aa).

Residues 1–123 (KQFTKCQLSQ…KLEQWLCEEL (123 aa)) enclose the C-type lysozyme domain. 4 disulfide bridges follow: C6–C120, C28–C111, C61–C77, and C73–C91. Residues K79, D82, D84, D87, and D88 each contribute to the Ca(2+) site.

Belongs to the glycosyl hydrolase 22 family. Lactose synthase (LS) is a heterodimer of a catalytic component, beta1,4-galactosyltransferase (beta4Gal-T1) and a regulatory component, alpha-lactalbumin (LA). As to expression, mammary gland specific. Secreted in milk.

It is found in the secreted. Regulatory subunit of lactose synthase, changes the substrate specificity of galactosyltransferase in the mammary gland making glucose a good acceptor substrate for this enzyme. This enables LS to synthesize lactose, the major carbohydrate component of milk. In other tissues, galactosyltransferase transfers galactose onto the N-acetylglucosamine of the oligosaccharide chains in glycoproteins. In Equus caballus (Horse), this protein is Alpha-lactalbumin B/C.